Reading from the N-terminus, the 81-residue chain is Costars family protein ABRACL (81 aa).

Belongs to the costars family.

The sequence is that of Costars family protein ABRACL (abracl) from Xenopus laevis (African clawed frog).